The primary structure comprises 158 residues: Large ribosomal subunit protein uL30 (158 aa).

It belongs to the universal ribosomal protein uL30 family. In terms of assembly, part of the 50S ribosomal subunit.

In Saccharolobus islandicus (strain Y.G.57.14 / Yellowstone #1) (Sulfolobus islandicus), this protein is Large ribosomal subunit protein uL30.